We begin with the raw amino-acid sequence, 433 residues long: KH domain-containing, RNA-binding, signal transduction-associated protein 1 (433 aa).

The tract at residues 1 to 79 is disordered; that stretch reads MQRRDDSSAR…PLLPGGAVKM (79 aa). Residues 41–76 show a composition bias toward low complexity; it reads GAQHPQPLLTGGAAAGSSGAQGPAAANPAPLLPGGA. The tract at residues 82–243 is involved in homodimerization; it reads ENKYLPELMA…VKKFLVPDMM (162 aa). The KH domain maps to 171-197; that stretch reads QEETGAKISVLGKGSMRDKAKEEELRK. 3 disordered regions span residues 259–305, 317–351, and 403–433; these read GVPE…ALVR, AAVARGVPPPPAVRGAPAPRARAAGIQRIPLPPPP, and QDDWNGTRPSLKAPPARPVKGAYREHPYGRY. The segment covering 277–300 has biased composition (pro residues); it reads APPPPPPVPRGRGVGPPPPPPPPR. Over residues 329-342 the composition is skewed to low complexity; that stretch reads VRGAPAPRARAAGI. The span at 424–433 shows a compositional bias: basic and acidic residues; sequence AYREHPYGRY.

Belongs to the KHDRBS family. Self-associates to form homooligomers when bound to RNA, oligomerization appears to be limited when binding to proteins. Post-translationally, tyrosine phosphorylated by several non-receptor tyrosine kinases including LCK, FYN and JAK3. In terms of processing, acetylated. Positively correlates with ability to bind RNA. Methylated by HRMT1L2. Required for nuclear localization.

It localises to the nucleus. The protein resides in the cytoplasm. It is found in the membrane. Functionally, recruited and tyrosine phosphorylated by several receptor systems, for example the T-cell, leptin and insulin receptors. Once phosphorylated, functions as an adapter protein in signal transduction cascades by binding to SH2 and SH3 domain-containing proteins. Role in G2-M progression in the cell cycle. Represses CBP-dependent transcriptional activation apparently by competing with other nuclear factors for binding to CBP. Also acts as a putative regulator of mRNA stability and/or translation rates and mediates mRNA nuclear export. Plays a role in the regulation of alternative splicing and influences mRNA splice site selection and exon inclusion. This Gallus gallus (Chicken) protein is KH domain-containing, RNA-binding, signal transduction-associated protein 1.